Reading from the N-terminus, the 133-residue chain is Transcription antitermination protein NusB (133 aa).

Belongs to the NusB family.

Functionally, involved in transcription antitermination. Required for transcription of ribosomal RNA (rRNA) genes. Binds specifically to the boxA antiterminator sequence of the ribosomal RNA (rrn) operons. The chain is Transcription antitermination protein NusB from Shouchella clausii (strain KSM-K16) (Alkalihalobacillus clausii).